A 343-amino-acid polypeptide reads, in one-letter code: Biotin synthase (343 aa).

The 219-residue stretch at 36–254 (NTIQISTLLS…IAVARIMMPK (219 aa)) folds into the Radical SAM core domain. Residues cysteine 51, cysteine 55, and cysteine 58 each contribute to the [4Fe-4S] cluster site. [2Fe-2S] cluster-binding residues include cysteine 95, cysteine 126, cysteine 186, and arginine 258.

Belongs to the radical SAM superfamily. Biotin synthase family. In terms of assembly, homodimer. It depends on [4Fe-4S] cluster as a cofactor. The cofactor is [2Fe-2S] cluster.

The enzyme catalyses (4R,5S)-dethiobiotin + (sulfur carrier)-SH + 2 reduced [2Fe-2S]-[ferredoxin] + 2 S-adenosyl-L-methionine = (sulfur carrier)-H + biotin + 2 5'-deoxyadenosine + 2 L-methionine + 2 oxidized [2Fe-2S]-[ferredoxin]. The protein operates within cofactor biosynthesis; biotin biosynthesis; biotin from 7,8-diaminononanoate: step 2/2. Its function is as follows. Catalyzes the conversion of dethiobiotin (DTB) to biotin by the insertion of a sulfur atom into dethiobiotin via a radical-based mechanism. The chain is Biotin synthase from Buchnera aphidicola subsp. Acyrthosiphon pisum (strain 5A).